A 302-amino-acid polypeptide reads, in one-letter code: Methionyl-tRNA formyltransferase (302 aa).

108 to 111 (SLLP) serves as a coordination point for (6S)-5,6,7,8-tetrahydrofolate. Basic and acidic residues predominate over residues 279–288 (KRPMEPEEFL). Residues 279 to 302 (KRPMEPEEFLRGFPLPEGSRAHTS) form a disordered region.

It belongs to the Fmt family.

The enzyme catalyses L-methionyl-tRNA(fMet) + (6R)-10-formyltetrahydrofolate = N-formyl-L-methionyl-tRNA(fMet) + (6S)-5,6,7,8-tetrahydrofolate + H(+). Functionally, attaches a formyl group to the free amino group of methionyl-tRNA(fMet). The formyl group appears to play a dual role in the initiator identity of N-formylmethionyl-tRNA by promoting its recognition by IF2 and preventing the misappropriation of this tRNA by the elongation apparatus. This Cereibacter sphaeroides (strain ATCC 17023 / DSM 158 / JCM 6121 / CCUG 31486 / LMG 2827 / NBRC 12203 / NCIMB 8253 / ATH 2.4.1.) (Rhodobacter sphaeroides) protein is Methionyl-tRNA formyltransferase.